A 401-amino-acid chain; its full sequence is Phosphoglycerate kinase (401 aa).

Residues 26-28 (DLN), Arg41, 64-67 (HLGR), Arg123, and Arg156 contribute to the substrate site. ATP is bound by residues Lys207, Gly298, Glu329, and 355-358 (GGDS).

It belongs to the phosphoglycerate kinase family. Monomer.

The protein resides in the cytoplasm. It carries out the reaction (2R)-3-phosphoglycerate + ATP = (2R)-3-phospho-glyceroyl phosphate + ADP. It functions in the pathway carbohydrate degradation; glycolysis; pyruvate from D-glyceraldehyde 3-phosphate: step 2/5. In Bdellovibrio bacteriovorus (strain ATCC 15356 / DSM 50701 / NCIMB 9529 / HD100), this protein is Phosphoglycerate kinase.